The chain runs to 86 residues: U18-theraphotoxin-Cg1a (86 aa).

A signal peptide spans 1 to 20; the sequence is KASVLITLAVLGVMFVWTSA. Residues 21–49 constitute a propeptide that is removed on maturation; it reads AELEERGSDQRDSPALIKSMAKVFQSEER. 3 disulfides stabilise this stretch: Cys51/Cys65, Cys58/Cys70, and Cys64/Cys78. A Phenylalanine amide modification is found at Phe84.

Belongs to the neurotoxin 10 (Hwtx-1) family. 47 subfamily. Expressed by the venom gland.

The protein localises to the secreted. Inhibits TTX-sensitive and TTX-insensitive sodium currents (IC(50) is 0.6 uM and 0.95 uM respectively) on rat dorsal root ganglion (DRG) neurons. Inhibits muscular subtypes sodium channels Nav1.4/SCN4A and Nav1.5/SCN5A transiently transfected in to HEK293 cells (IC(50) is 5.42 uM and 0.45 uM respectively). Also blocks Kv2.1/KCNB1 potassium channels expressed in X.laevis oocytes with an IC(50) of 604 nM. Injection of the toxin in mice was immediately followed by general ataxia, lack of response to stimuli and semiparalysis. The protein is U18-theraphotoxin-Cg1a of Chilobrachys guangxiensis (Chinese earth tiger tarantula).